Reading from the N-terminus, the 91-residue chain is Elongation factor 1-beta (91 aa).

This sequence belongs to the EF-1-beta/EF-1-delta family.

In terms of biological role, promotes the exchange of GDP for GTP in EF-1-alpha/GDP, thus allowing the regeneration of EF-1-alpha/GTP that could then be used to form the ternary complex EF-1-alpha/GTP/AAtRNA. This chain is Elongation factor 1-beta (ef1b), found in Pyrococcus horikoshii (strain ATCC 700860 / DSM 12428 / JCM 9974 / NBRC 100139 / OT-3).